A 221-amino-acid chain; its full sequence is Large ribosomal subunit protein uL3 (221 aa).

This sequence belongs to the universal ribosomal protein uL3 family. In terms of assembly, part of the 50S ribosomal subunit. Forms a cluster with proteins L14 and L19.

In terms of biological role, one of the primary rRNA binding proteins, it binds directly near the 3'-end of the 23S rRNA, where it nucleates assembly of the 50S subunit. In Nocardia farcinica (strain IFM 10152), this protein is Large ribosomal subunit protein uL3.